The chain runs to 996 residues: Sodium/potassium-transporting ATPase subunit alpha-A (996 aa).

Transmembrane regions (helical) follow at residues 73-93 and 107-123; these read LFGG…IAYT and LYLG…TGCF. The tract at residues 191–211 is disordered; it reads DNSSLTGESEPQSRSTECTND. The next 2 membrane-spanning stretches (helical) occupy residues 268–290 and 297–325; these read FIHI…SFLY and AAIF…TLTA. Asp353 functions as the 4-aspartylphosphate intermediate in the catalytic mechanism. An ATP-binding site is contributed by Lys483. Asp692 and Asp696 together coordinate Mg(2+). 4 helical membrane passes run 762-785, 820-847, 889-909, and 926-951; these read LSPF…ILCI, ERLI…VIMG, YTCH…DLII, and TLNF…DKGL.

Belongs to the cation transport ATPase (P-type) (TC 3.A.3) family. Type IIC subfamily. In terms of assembly, the sodium/potassium-transporting ATPase is composed of a catalytic alpha subunit, an auxiliary non-catalytic beta subunit and an additional regulatory subunit.

Its subcellular location is the cell membrane. The catalysed reaction is K(+)(out) + Na(+)(in) + ATP + H2O = K(+)(in) + Na(+)(out) + ADP + phosphate + H(+). Functionally, this is the catalytic component of the active enzyme, which catalyzes the hydrolysis of ATP coupled with the exchange of sodium and potassium ions across the plasma membrane. This action creates the electrochemical gradient of sodium and potassium ions, providing the energy for active transport of various nutrients. This is Sodium/potassium-transporting ATPase subunit alpha-A from Artemia franciscana (Brine shrimp).